The sequence spans 340 residues: Ribosomal RNA small subunit methyltransferase C (340 aa).

This sequence belongs to the methyltransferase superfamily. RsmC family. In terms of assembly, monomer.

It localises to the cytoplasm. It carries out the reaction guanosine(1207) in 16S rRNA + S-adenosyl-L-methionine = N(2)-methylguanosine(1207) in 16S rRNA + S-adenosyl-L-homocysteine + H(+). Functionally, specifically methylates the guanine in position 1207 of 16S rRNA in the 30S particle. This Vibrio vulnificus (strain CMCP6) protein is Ribosomal RNA small subunit methyltransferase C.